We begin with the raw amino-acid sequence, 390 residues long: Zinc finger protein 121 (390 aa).

Residues 88–110 (FEYSDCEEAFVDQSHLQANRITH) form a C2H2-type 1; degenerate zinc finger. The C2H2-type 2; degenerate zinc finger occupies 116-138 (YEQKQCGRAFTYSTSHAVSVKMH). 9 C2H2-type zinc fingers span residues 144-166 (YECK…MRTH), 172-194 (YECK…VRIH), 200-222 (YQCK…VRIH), 228-250 (YECN…FKTH), 256-278 (FECK…FRIH), 284-306 (YKCK…VKIH), 312-334 (YECK…IRTH), 340-362 (YICK…VRIH), and 368-390 (YICN…LKTH).

The protein belongs to the krueppel C2H2-type zinc-finger protein family.

It is found in the nucleus. Functionally, may be involved in transcriptional regulation. The protein is Zinc finger protein 121 (ZNF121) of Homo sapiens (Human).